The sequence spans 447 residues: Sporulation protein YpeB (447 aa).

It belongs to the YpeB family.

Its function is as follows. Required for spore cortex hydrolysis during germination. Appears to be required for either expression, localization, activation or function of SleB. The chain is Sporulation protein YpeB from Oceanobacillus iheyensis (strain DSM 14371 / CIP 107618 / JCM 11309 / KCTC 3954 / HTE831).